The following is a 150-amino-acid chain: UPF0039 protein C11D3.02c (150 aa).

The N-acetyltransferase domain occupies 9–150 (KYFNSLDVKE…IPHVEMRLEL (142 aa)).

This sequence belongs to the UPF0039 (ElaA) family.

The chain is UPF0039 protein C11D3.02c from Schizosaccharomyces pombe (strain 972 / ATCC 24843) (Fission yeast).